A 360-amino-acid chain; its full sequence is Probable dual-specificity RNA methyltransferase RlmN (360 aa).

Glutamate 91 functions as the Proton acceptor in the catalytic mechanism. The region spanning 97–335 (QHYGQSVCVT…CVVRQEHGTD (239 aa)) is the Radical SAM core domain. Residues cysteine 104 and cysteine 340 are joined by a disulfide bond. [4Fe-4S] cluster-binding residues include cysteine 111, cysteine 115, and cysteine 118. S-adenosyl-L-methionine is bound by residues 163-164 (GE), serine 195, 218-220 (SLH), and asparagine 296. Residue cysteine 340 is the S-methylcysteine intermediate of the active site.

The protein belongs to the radical SAM superfamily. RlmN family. The cofactor is [4Fe-4S] cluster.

The protein resides in the cytoplasm. The enzyme catalyses adenosine(2503) in 23S rRNA + 2 reduced [2Fe-2S]-[ferredoxin] + 2 S-adenosyl-L-methionine = 2-methyladenosine(2503) in 23S rRNA + 5'-deoxyadenosine + L-methionine + 2 oxidized [2Fe-2S]-[ferredoxin] + S-adenosyl-L-homocysteine. It carries out the reaction adenosine(37) in tRNA + 2 reduced [2Fe-2S]-[ferredoxin] + 2 S-adenosyl-L-methionine = 2-methyladenosine(37) in tRNA + 5'-deoxyadenosine + L-methionine + 2 oxidized [2Fe-2S]-[ferredoxin] + S-adenosyl-L-homocysteine. Functionally, specifically methylates position 2 of adenine 2503 in 23S rRNA and position 2 of adenine 37 in tRNAs. In Streptococcus equi subsp. zooepidemicus (strain H70), this protein is Probable dual-specificity RNA methyltransferase RlmN.